The primary structure comprises 255 residues: Imidazole glycerol phosphate synthase subunit HisF (255 aa).

Active-site residues include D11 and D130.

Belongs to the HisA/HisF family. In terms of assembly, heterodimer of HisH and HisF.

It is found in the cytoplasm. It catalyses the reaction 5-[(5-phospho-1-deoxy-D-ribulos-1-ylimino)methylamino]-1-(5-phospho-beta-D-ribosyl)imidazole-4-carboxamide + L-glutamine = D-erythro-1-(imidazol-4-yl)glycerol 3-phosphate + 5-amino-1-(5-phospho-beta-D-ribosyl)imidazole-4-carboxamide + L-glutamate + H(+). Its pathway is amino-acid biosynthesis; L-histidine biosynthesis; L-histidine from 5-phospho-alpha-D-ribose 1-diphosphate: step 5/9. IGPS catalyzes the conversion of PRFAR and glutamine to IGP, AICAR and glutamate. The HisF subunit catalyzes the cyclization activity that produces IGP and AICAR from PRFAR using the ammonia provided by the HisH subunit. This Syntrophotalea carbinolica (strain DSM 2380 / NBRC 103641 / GraBd1) (Pelobacter carbinolicus) protein is Imidazole glycerol phosphate synthase subunit HisF.